A 783-amino-acid chain; its full sequence is DNA polymerase II (783 aa).

It belongs to the DNA polymerase type-B family.

The enzyme catalyses DNA(n) + a 2'-deoxyribonucleoside 5'-triphosphate = DNA(n+1) + diphosphate. Its activity is regulated as follows. DNA polymerase II activity is regulated by the lexA gene during the SOS response. In terms of biological role, thought to be involved in DNA repair and/or mutagenesis. Its processivity is enhanced by the beta sliding clamp (dnaN) and clamp loader. The protein is DNA polymerase II (polB) of Escherichia coli (strain K12).